The primary structure comprises 287 residues: 4-diphosphocytidyl-2-C-methyl-D-erythritol kinase (287 aa).

Lys12 is a catalytic residue. 97 to 107 (PMGGGLGGGSS) contributes to the ATP binding site. Residue Asp139 is part of the active site.

Belongs to the GHMP kinase family. IspE subfamily.

It carries out the reaction 4-CDP-2-C-methyl-D-erythritol + ATP = 4-CDP-2-C-methyl-D-erythritol 2-phosphate + ADP + H(+). It participates in isoprenoid biosynthesis; isopentenyl diphosphate biosynthesis via DXP pathway; isopentenyl diphosphate from 1-deoxy-D-xylulose 5-phosphate: step 3/6. Its function is as follows. Catalyzes the phosphorylation of the position 2 hydroxy group of 4-diphosphocytidyl-2C-methyl-D-erythritol. The chain is 4-diphosphocytidyl-2-C-methyl-D-erythritol kinase from Marinobacter nauticus (strain ATCC 700491 / DSM 11845 / VT8) (Marinobacter aquaeolei).